The primary structure comprises 1957 residues: [F-actin]-monooxygenase MICAL2 (1957 aa).

The segment at 2-494 (GENEDEKQAQ…KHLYITKELE (493 aa)) is monooxygenase domain. Residues Cys-97, 116–118 (EKR), 123–125 (RNN), Phe-183, Tyr-298, and Asp-398 contribute to the FAD site. In terms of domain architecture, Calponin-homology (CH) spans 516–619 (DIRPSKLLTW…MVMYLSKFYE (104 aa)). Ser-631 carries the post-translational modification Phosphoserine. Positions 660 to 681 (RKRTPRVDGQTGENDMNKRRRK) match the Nuclear localization signal motif. Disordered regions lie at residues 660–714 (RKRT…NQNK) and 886–942 (QNKL…HPSH). Residues 687 to 714 (DEPSNFSSRSLGSNQECGSSKEGGNQNK) show a composition bias toward polar residues. Residues 899-910 (PPSPPSRLPSPD) show a composition bias toward pro residues. Residues 911-925 (PAASSSPSTVDSASP) are compositionally biased toward low complexity. Residues 1000–1062 (DTCYFCKKRV…KPHFIHCKTN (63 aa)) enclose the LIM zinc-binding domain. 8 residues coordinate Zn(2+): Cys-1002, Cys-1005, His-1023, Cys-1026, Cys-1029, Cys-1032, Cys-1052, and His-1055. 6 disordered regions span residues 1070–1143 (AELK…PSEW), 1168–1243 (SEDS…TPSK), 1258–1345 (VNKR…LYLP), 1361–1431 (GEDG…EGGP), 1467–1626 (KAGE…SPPC), and 1675–1779 (ESRQ…KEKK). Over residues 1185-1195 (SHTEPCEEKPW) the composition is skewed to basic and acidic residues. The span at 1232–1243 (RANSFQSPTPSK) shows a compositional bias: polar residues. A compositionally biased stretch (low complexity) spans 1275 to 1294 (LPSSSSHSSSPPSSSSTSVS). Residues 1302–1316 (SPPQMTASEPLSQVS) show a composition bias toward polar residues. Positions 1324-1363 (TPNFRRRAVAQGAPREIPLYLPHHPKPEWAEYCLVSPGED) are interaction with MAPK1. Basic and acidic residues-rich tracts occupy residues 1388 to 1402 (SNHR…KDRS) and 1413 to 1431 (GEDR…EGGP). Over residues 1485 to 1496 (VLKPVRPLLLPR) the composition is skewed to low complexity. The segment covering 1552–1562 (GGKKAWAKQES) has biased composition (basic and acidic residues). Residues 1570 to 1579 (CTRSFSLRKT) show a composition bias toward polar residues. Ser-1688 carries the post-translational modification Phosphoserine. A compositionally biased stretch (pro residues) spans 1718–1733 (APPPPPPPPPPPPPPT). Residues 1751 to 1762 (ASSSASSTSSSS) show a composition bias toward low complexity. Positions 1796-1945 (KQEELKRLYK…EKAEDQHFES (150 aa)) constitute a bMERB domain.

It belongs to the Mical family. As to quaternary structure, interacts with PLXNA4. Interacts with RAB1B. Interacts with MAPK1/ERK2. Interacts with RAB35, RAB8A, RAB10, RAB13 and RAB15 (in their GTP-bound forms); binding to RAB35 is of low affinity compared to other Rab proteins; at least in case of RAB8A may bind 2 molecules of RAB8A simultaneously through a high and a low affinity binding site, respectively. May interact with MAPK1/ERK2. Interacts with CORO1C; this interaction recruits MICAL2 to the actin filaments. FAD serves as cofactor.

It localises to the nucleus. The protein localises to the cytoplasm. It carries out the reaction L-methionyl-[F-actin] + NADPH + O2 + H(+) = L-methionyl-(R)-S-oxide-[F-actin] + NADP(+) + H2O. With respect to regulation, specifically inhibited by CCG-1423, a small molecule inhibitor of SRF:MKL1/MRTF-A-dependent transcription. Its function is as follows. Methionine monooxygenase that promotes depolymerization of F-actin by mediating oxidation of residues 'Met-44' and 'Met-47' on actin to form methionine-sulfoxide, resulting in actin filament disassembly and preventing repolymerization. Regulates the disassembly of branched actin networks also by oxidizing ARP3B-containing ARP2/3 complexes leading to ARP3B dissociation from the network. Acts as a key regulator of the SRF signaling pathway elicited by nerve growth factor and serum: mediates oxidation and subsequent depolymerization of nuclear actin, leading to increase MKL1/MRTF-A presence in the nucleus and promote SRF:MKL1/MRTF-A-dependent gene transcription. Does not activate SRF:MKL1/MRTF-A through RhoA. The protein is [F-actin]-monooxygenase MICAL2 of Homo sapiens (Human).